A 271-amino-acid chain; its full sequence is Mannosyl-3-phosphoglycerate phosphatase (271 aa).

The Nucleophile role is filled by Asp-13. Mg(2+)-binding residues include Asp-13, Asp-15, and Asp-214.

This sequence belongs to the HAD-like hydrolase superfamily. MPGP family. The cofactor is Mg(2+).

The protein resides in the cytoplasm. It catalyses the reaction 2-O-(alpha-D-mannosyl)-3-phosphoglycerate + H2O = (2R)-2-O-(alpha-D-mannosyl)-glycerate + phosphate. In Shigella boydii serotype 4 (strain Sb227), this protein is Mannosyl-3-phosphoglycerate phosphatase (yedP).